We begin with the raw amino-acid sequence, 127 residues long: Large ribosomal subunit protein uL22 (127 aa).

As to quaternary structure, part of the 50S ribosomal subunit.

Functionally, this protein binds specifically to 23S rRNA; its binding is stimulated by other ribosomal proteins, e.g. L4, L17, and L20. It is important during the early stages of 50S assembly. It makes multiple contacts with different domains of the 23S rRNA in the assembled 50S subunit and ribosome. In terms of biological role, the globular domain of the protein is located near the polypeptide exit tunnel on the outside of the subunit, while an extended beta-hairpin is found that lines the wall of the exit tunnel in the center of the 70S ribosome. This Rhodopseudomonas palustris (strain ATCC BAA-98 / CGA009) protein is Large ribosomal subunit protein uL22.